Consider the following 165-residue polypeptide: MTSKKKRQRGSRTHGGGSHKNRRGAGHRGGRGDAGRDKHEFHNHEPLGKSGFKRPQKVQEEAATIDVREIDENVTLLAADDVAEVEDGGFRVDVRDVVEEADDADYVKVLGAGQVRHELTLIADDFSEGAREKVEGAGGSVELTDLGEERQAEAEETEDADADEE.

A compositionally biased stretch (basic residues) spans 1 to 29; the sequence is MTSKKKRQRGSRTHGGGSHKNRRGAGHRG. Disordered stretches follow at residues 1–59 and 133–165; these read MTSK…QKVQ and KVEG…ADEE. A compositionally biased stretch (basic and acidic residues) spans 30 to 47; that stretch reads GRGDAGRDKHEFHNHEPL. Acidic residues predominate over residues 154–165; the sequence is AEETEDADADEE.

Belongs to the universal ribosomal protein uL15 family. In terms of assembly, part of the 50S ribosomal subunit. Interacts weakly with proteins L18e and L32e.

Its function is as follows. Binds to the 23S rRNA. This is Large ribosomal subunit protein uL15 (rpl15) from Haloarcula marismortui (strain ATCC 43049 / DSM 3752 / JCM 8966 / VKM B-1809) (Halobacterium marismortui).